Reading from the N-terminus, the 156-residue chain is Persephin (156 aa).

The N-terminal stretch at 1–21 (MAVGKFLLGSLLLLSLQLGQG) is a signal peptide. Cystine bridges form between cysteine 66–cysteine 124, cysteine 93–cysteine 152, and cysteine 97–cysteine 154.

It belongs to the TGF-beta family. GDNF subfamily. In terms of assembly, homodimer; disulfide-linked. Interacts with GFRA4 coreceptor and RET: forms a 2:2:2 ternary complex composed of PSPN ligand, GFRA4 and RET receptor.

Its subcellular location is the secreted. In terms of biological role, growth factor that exhibits neurotrophic activity on mesencephalic dopaminergic and motor neurons. Acts by binding to its coreceptor, GFRA4, leading to autophosphorylation and activation of the RET receptor. This chain is Persephin, found in Homo sapiens (Human).